The sequence spans 393 residues: NAD(P)H-quinone oxidoreductase subunit H, chloroplastic (393 aa).

It belongs to the complex I 49 kDa subunit family. As to quaternary structure, NDH is composed of at least 16 different subunits, 5 of which are encoded in the nucleus.

The protein resides in the plastid. The protein localises to the chloroplast thylakoid membrane. It catalyses the reaction a plastoquinone + NADH + (n+1) H(+)(in) = a plastoquinol + NAD(+) + n H(+)(out). The catalysed reaction is a plastoquinone + NADPH + (n+1) H(+)(in) = a plastoquinol + NADP(+) + n H(+)(out). Its function is as follows. NDH shuttles electrons from NAD(P)H:plastoquinone, via FMN and iron-sulfur (Fe-S) centers, to quinones in the photosynthetic chain and possibly in a chloroplast respiratory chain. The immediate electron acceptor for the enzyme in this species is believed to be plastoquinone. Couples the redox reaction to proton translocation, and thus conserves the redox energy in a proton gradient. The chain is NAD(P)H-quinone oxidoreductase subunit H, chloroplastic from Zea mays (Maize).